The sequence spans 697 residues: Elongation factor G 2 (697 aa).

The tr-type G domain occupies 5 to 280 (SKYRNIGIFA…AVVDYLPAPD (276 aa)). Residues 14–21 (AHVDAGKT), 78–82 (DTPGH), and 132–135 (NKLD) each bind GTP.

This sequence belongs to the TRAFAC class translation factor GTPase superfamily. Classic translation factor GTPase family. EF-G/EF-2 subfamily.

The protein localises to the cytoplasm. Its function is as follows. Catalyzes the GTP-dependent ribosomal translocation step during translation elongation. During this step, the ribosome changes from the pre-translocational (PRE) to the post-translocational (POST) state as the newly formed A-site-bound peptidyl-tRNA and P-site-bound deacylated tRNA move to the P and E sites, respectively. Catalyzes the coordinated movement of the two tRNA molecules, the mRNA and conformational changes in the ribosome. The chain is Elongation factor G 2 from Shewanella denitrificans (strain OS217 / ATCC BAA-1090 / DSM 15013).